The following is a 263-amino-acid chain: Ribosomal RNA small subunit methyltransferase A (263 aa).

S-adenosyl-L-methionine contacts are provided by Asn-20, Leu-22, Gly-47, Glu-68, Asp-90, and Asn-111.

Belongs to the class I-like SAM-binding methyltransferase superfamily. rRNA adenine N(6)-methyltransferase family. RsmA subfamily.

It localises to the cytoplasm. It carries out the reaction adenosine(1518)/adenosine(1519) in 16S rRNA + 4 S-adenosyl-L-methionine = N(6)-dimethyladenosine(1518)/N(6)-dimethyladenosine(1519) in 16S rRNA + 4 S-adenosyl-L-homocysteine + 4 H(+). Its function is as follows. Specifically dimethylates two adjacent adenosines (A1518 and A1519) in the loop of a conserved hairpin near the 3'-end of 16S rRNA in the 30S particle. May play a critical role in biogenesis of 30S subunits. The protein is Ribosomal RNA small subunit methyltransferase A of Chlorobium chlorochromatii (strain CaD3).